We begin with the raw amino-acid sequence, 90 residues long: HssA/B-like protein 4 (90 aa).

This sequence belongs to the hssA/B family.

In Dictyostelium discoideum (Social amoeba), this protein is HssA/B-like protein 4 (hssl4).